Consider the following 334-residue polypeptide: Large ribosomal subunit protein uL3 (334 aa).

Residues 1–10 are compositionally biased toward basic residues; sequence MGMKKSRPRR. The disordered stretch occupies residues 1-20; the sequence is MGMKKSRPRRGSLAFSPRKR.

Belongs to the universal ribosomal protein uL3 family. As to quaternary structure, part of the 50S ribosomal subunit. Forms a cluster with proteins L14 and L24e.

Functionally, one of the primary rRNA binding proteins, it binds directly near the 3'-end of the 23S rRNA, where it nucleates assembly of the 50S subunit. The chain is Large ribosomal subunit protein uL3 from Methanococcus maripaludis (strain C6 / ATCC BAA-1332).